Consider the following 532-residue polypeptide: Probable alpha-galactosidase A (532 aa).

An N-terminal signal peptide occupies residues 1–21; the sequence is MDTTKSLLSTLIAIMIPLSLG. Cys-44 and Cys-76 are oxidised to a cystine. Residues Asn-47, Asn-91, and Asn-121 are each glycosylated (N-linked (GlcNAc...) asparagine). Cysteines 124 and 154 form a disulfide. Asp-152 serves as the catalytic Nucleophile. Asn-201 carries an N-linked (GlcNAc...) asparagine glycan. Asp-210 functions as the Proton donor in the catalytic mechanism. Positions 410 to 531 constitute a Ricin B-type lectin domain; it reads CSTVIPTGIV…GLPSGVDIKP (122 aa). 2 disulfide bridges follow: Cys-427/Cys-441 and Cys-466/Cys-478.

The protein belongs to the glycosyl hydrolase 27 family.

Its subcellular location is the secreted. The catalysed reaction is Hydrolysis of terminal, non-reducing alpha-D-galactose residues in alpha-D-galactosides, including galactose oligosaccharides, galactomannans and galactolipids.. Its function is as follows. Hydrolyzes a variety of simple alpha-D-galactoside as well as more complex molecules such as oligosaccharides and polysaccharides. This chain is Probable alpha-galactosidase A (aglA), found in Aspergillus fumigatus (strain ATCC MYA-4609 / CBS 101355 / FGSC A1100 / Af293) (Neosartorya fumigata).